The chain runs to 652 residues: MNKQQKEFKSFYSIRKSSLGVASVAISTLLLLMSNGEAKAAEETGVTNTEAQPKTEAVASPTTTTTEKAPEAKPVAKPVANAVSVSNKEVVAPTTETKEAKEVKAVKEVKAPKEAKEEKPAAKADNNTYPILNQELREAIKNPAIKDKDHSAPNSRPIDFEMKKKDGTQQFYHYASSVKPARVIFTDSKPEIELGLQSGQFWRKFEVYEGDKKLPIKLVSYDTVKDYAYIRFSVSNGTKAVKIVSSTHFNNKEEKYDYTLMEFAQPIYNSADKFKTEEDYKAEKLLAPYKKAKTLERQVYELNKIQDKLPEKLKAEYKKKLEETKKALDEQVKSAITEFQNVQPTNEKMTDLQDTKYVVYESVENNESMMDAFVKHPIKTGMLNGKKYMVMETTNDDYWKDFMVEGQRVRTISKDAKNNTRTIIFPYVEGKTLYDAIVKVHVKTIDYDGQYHVRIVDKEAFTKANADKTNKKEQQDNSAKKETTPAMPSKPTTPPVEKESQKQDSQKDDNKQSPSVEKENDASSESGKDKMPVTKPAKAEVESSSTTPTKVVSTTQNVAKPTTASSETTKDVVQTSAGSSEAKDSAPLQKANIKNTNDGHTQSQNNKNTQENKAKSLPQTGEESNKDMTLPLMALIALSSIVAFVLPRKRKN.

Residues 1 to 40 (MNKQQKEFKSFYSIRKSSLGVASVAISTLLLLMSNGEAKA) form the signal peptide. A YSIRK-G/S signaling motif motif is present at residues 12–23 (YSIRKSSLGVAS). Residues 41–75 (AEETGVTNTEAQPKTEAVASPTTTTTEKAPEAKPV) form a disordered region. Positions 54-75 (KTEAVASPTTTTTEKAPEAKPV) are enriched in low complexity. 2 consecutive NEAT domains span residues 151-276 (SAPN…KFKT) and 348-465 (KMTD…TKAN). Methionine 369 and tyrosine 447 together coordinate heme. Basic and acidic residues-rich tracts occupy residues 466–483 (ADKT…KKET) and 496–541 (VEKE…KAEV). The disordered stretch occupies residues 466 to 626 (ADKTNKKEQQ…LPQTGEESNK (161 aa)). Low complexity predominate over residues 542–555 (ESSSTTPTKVVSTT). Polar residues-rich tracts occupy residues 556-579 (QNVA…SAGS) and 592-622 (NIKN…QTGE). The short motif at 617 to 621 (LPQTG) is the LPXTG sorting signal element. Threonine 620 is subject to Pentaglycyl murein peptidoglycan amidated threonine. A propeptide spans 621–652 (GEESNKDMTLPLMALIALSSIVAFVLPRKRKN) (removed by sortase).

This sequence belongs to the IsdB family. As to quaternary structure, interacts with host HBA; this interaction allows heme extraction as iron source. Interacts with IsdA.

The protein resides in the secreted. Its subcellular location is the cell wall. Functionally, cell wall-anchored surface receptor that extracts heme from oxidized metHb to enable growth on hemoglobin as a sole iron source. Rapidly extracts heme from hemoglobin and transfers it to IsdA or IsdC, which then relays it to the membrane transporter/IsdEF for internalization. Also promotes resistance to hydrogen peroxide and killing by neutrophils. The sequence is that of Iron-regulated surface determinant protein B (isdB) from Staphylococcus aureus (strain MRSA252).